The following is a 260-amino-acid chain: Voltage-dependent calcium channel gamma-6 subunit (260 aa).

A run of 4 helical transmembrane segments spans residues 43 to 63, 143 to 163, 169 to 189, and 221 to 241; these read LLVAIVGATLAVLAVGTEFWV, VIAVLGLTAMALGCLCVIMVL, SLLRLGAVCFGLSGLLLFVSL, and LGCGVGAGLILLLGGVCFLLL.

Belongs to the PMP-22/EMP/MP20 family. CACNG subfamily. In terms of assembly, interacts with CACNA1C. Identified in a complex with the L-type calcium channel subunits CACNA1C, CACNA2D1 and either CACNB1 or CACNB2. Detected in brain and heart (at protein level).

The protein resides in the cell membrane. Its function is as follows. Regulates the activity of L-type calcium channels that contain CACNA1C as pore-forming subunit. The protein is Voltage-dependent calcium channel gamma-6 subunit (Cacng6) of Mus musculus (Mouse).